The primary structure comprises 111 residues: Ig kappa chain V-III region PC 7769 (111 aa).

Positions 1 to 23 (DIVLTQSPASLAVSLGQRATISC) are framework-1. Cys-23 and Cys-92 are disulfide-bonded. Positions 24–38 (KASQSVDYDGDSYMN) are complementarity-determining-1. A framework-2 region spans residues 39–53 (WYQQKPGQPPKVLIF). The tract at residues 54–60 (AASNLES) is complementarity-determining-2. The segment at 61 to 92 (GIPARFSGSGSGTDFTLNIHPVEEEDAATYYC) is framework-3. Residues 93–101 (QQSNEDPWT) form a complementarity-determining-3 region. The segment at 102 to 111 (FGSGTKLEIK) is framework-4.

The protein is Ig kappa chain V-III region PC 7769 of Mus musculus (Mouse).